The following is an 82-amino-acid chain: Small ribosomal subunit protein bS16 (82 aa).

This sequence belongs to the bacterial ribosomal protein bS16 family.

The chain is Small ribosomal subunit protein bS16 from Actinobacillus pleuropneumoniae serotype 5b (strain L20).